The primary structure comprises 341 residues: MKFLDQAKIYIRSGNGGAGAVSFRREKFLEFGGPDGGDGGRGGDVWVEAVDGLNTLIDYRYQQHFKAKTGMHGMGRNMTGGKGDDVVLRVPVGTQIFEEDNETLICDITEVGQRYRLAKGGNGGFGNLHFTTSTNRAPRRANPGQEGIERTIWLRLKLIADAGLVGLPNAGKSTFLASVTAAKPKIADYPFTTLHPNLGVARIDGREFVIADIPGLIEGASEGVGLGDRFLGHVERTRVLLHLVSAQEEDVAKAYQVIRGELEAYEHGLADKPEIVALSQVDTLDPETRKAKVKALKKACGCEPLLLSAVSHEGLNDTLRQLARIIDLSRAEEAGTAQAEE.

Residues 1 to 159 (MKFLDQAKIY…RTIWLRLKLI (159 aa)) enclose the Obg domain. Residues 160-327 (ADAGLVGLPN…TLRQLARIID (168 aa)) enclose the OBG-type G domain. GTP-binding positions include 166-173 (GLPNAGKS), 191-195 (FTTLH), 212-215 (DIPG), 279-282 (SQVD), and 308-310 (SAV). Ser-173 and Thr-193 together coordinate Mg(2+).

This sequence belongs to the TRAFAC class OBG-HflX-like GTPase superfamily. OBG GTPase family. Monomer. The cofactor is Mg(2+).

It localises to the cytoplasm. In terms of biological role, an essential GTPase which binds GTP, GDP and possibly (p)ppGpp with moderate affinity, with high nucleotide exchange rates and a fairly low GTP hydrolysis rate. Plays a role in control of the cell cycle, stress response, ribosome biogenesis and in those bacteria that undergo differentiation, in morphogenesis control. This Brucella abortus biovar 1 (strain 9-941) protein is GTPase Obg.